The following is a 206-amino-acid chain: Small ribosomal subunit protein uS4 (206 aa).

The region spanning 98-158 (RRLDNVVFRL…EKSRSMELIK (61 aa)) is the S4 RNA-binding domain.

Belongs to the universal ribosomal protein uS4 family. As to quaternary structure, part of the 30S ribosomal subunit. Contacts protein S5. The interaction surface between S4 and S5 is involved in control of translational fidelity.

One of the primary rRNA binding proteins, it binds directly to 16S rRNA where it nucleates assembly of the body of the 30S subunit. Its function is as follows. With S5 and S12 plays an important role in translational accuracy. In Thermoanaerobacter pseudethanolicus (strain ATCC 33223 / 39E) (Clostridium thermohydrosulfuricum), this protein is Small ribosomal subunit protein uS4.